Reading from the N-terminus, the 368-residue chain is DNA integrity scanning protein DisA (368 aa).

In terms of domain architecture, DAC spans 15–153 (DERLRATLAA…DGRRHVLDEP (139 aa)). Residues Gly82, Leu100, and 113 to 117 (TRHRS) each bind ATP. Positions 101 to 121 (QPDPSIPTNESGTRHRSAERT) are disordered. Residues 112–121 (GTRHRSAERT) show a composition bias toward basic and acidic residues.

Belongs to the DisA family. In terms of assembly, homooctamer. The cofactor is Mg(2+).

It catalyses the reaction 2 ATP = 3',3'-c-di-AMP + 2 diphosphate. Functionally, participates in a DNA-damage check-point. DisA forms globular foci that rapidly scan along the chromosomes searching for lesions. Its function is as follows. Also has diadenylate cyclase activity, catalyzing the condensation of 2 ATP molecules into cyclic di-AMP (c-di-AMP). c-di-AMP likely acts as a signaling molecule that may couple DNA integrity with a cellular process. This chain is DNA integrity scanning protein DisA, found in Acidothermus cellulolyticus (strain ATCC 43068 / DSM 8971 / 11B).